Reading from the N-terminus, the 754-residue chain is Phosphoribosylformylglycinamidine synthase subunit PurL (754 aa).

Residue His54 is part of the active site. Positions 57 and 101 each coordinate ATP. Residue Glu103 participates in Mg(2+) binding. Residues 104–107 and Arg126 each bind substrate; that span reads SHNH. The active-site Proton acceptor is the His105. A Mg(2+)-binding site is contributed by Asp127. Gln252 is a binding site for substrate. Asp280 contacts Mg(2+). A substrate-binding site is contributed by 324 to 326; sequence ESQ. Residues 386–412 are disordered; the sequence is PVYQRPVSRPESQEALNADSSKGLPRP. Residues Asn512 and Gly549 each coordinate ATP. Asn550 provides a ligand contact to Mg(2+). Ser552 is a binding site for substrate.

This sequence belongs to the FGAMS family. In terms of assembly, monomer. Part of the FGAM synthase complex composed of 1 PurL, 1 PurQ and 2 PurS subunits.

It localises to the cytoplasm. The catalysed reaction is N(2)-formyl-N(1)-(5-phospho-beta-D-ribosyl)glycinamide + L-glutamine + ATP + H2O = 2-formamido-N(1)-(5-O-phospho-beta-D-ribosyl)acetamidine + L-glutamate + ADP + phosphate + H(+). The protein operates within purine metabolism; IMP biosynthesis via de novo pathway; 5-amino-1-(5-phospho-D-ribosyl)imidazole from N(2)-formyl-N(1)-(5-phospho-D-ribosyl)glycinamide: step 1/2. Functionally, part of the phosphoribosylformylglycinamidine synthase complex involved in the purines biosynthetic pathway. Catalyzes the ATP-dependent conversion of formylglycinamide ribonucleotide (FGAR) and glutamine to yield formylglycinamidine ribonucleotide (FGAM) and glutamate. The FGAM synthase complex is composed of three subunits. PurQ produces an ammonia molecule by converting glutamine to glutamate. PurL transfers the ammonia molecule to FGAR to form FGAM in an ATP-dependent manner. PurS interacts with PurQ and PurL and is thought to assist in the transfer of the ammonia molecule from PurQ to PurL. In Mycobacterium leprae (strain Br4923), this protein is Phosphoribosylformylglycinamidine synthase subunit PurL.